Consider the following 335-residue polypeptide: Fructose-1,6-bisphosphatase class 1 (335 aa).

Glutamate 93, aspartate 117, leucine 119, and aspartate 120 together coordinate Mg(2+). Residues 120-123, asparagine 213, tyrosine 244, and lysine 274 contribute to the substrate site; that span reads DGSS. Glutamate 280 is a binding site for Mg(2+).

Belongs to the FBPase class 1 family. Homotetramer. Mg(2+) serves as cofactor.

It is found in the cytoplasm. It catalyses the reaction beta-D-fructose 1,6-bisphosphate + H2O = beta-D-fructose 6-phosphate + phosphate. The protein operates within carbohydrate biosynthesis; gluconeogenesis. In Flavobacterium psychrophilum (strain ATCC 49511 / DSM 21280 / CIP 103535 / JIP02/86), this protein is Fructose-1,6-bisphosphatase class 1.